A 156-amino-acid polypeptide reads, in one-letter code: MAVVDLIDLPAIAPPNTPLVGLDLGEKTIGVAVSDATRMVASPLGLIRKTKFTDDAKALFKLMESRRASGIVIGLPVNMDGTEGTRCQSNRAFARNLLRLREDLPIAFWDERMSTMAVNRMLVGEADMTRARRADVVDKMAAAWILQGALDRLRNL.

Belongs to the YqgF nuclease family.

The protein resides in the cytoplasm. In terms of biological role, could be a nuclease involved in processing of the 5'-end of pre-16S rRNA. This Phenylobacterium zucineum (strain HLK1) protein is Putative pre-16S rRNA nuclease.